Here is a 309-residue protein sequence, read N- to C-terminus: ADP,ATP carrier protein 1 (309 aa).

Solcar repeat units follow at residues 11 to 104 (SHFG…IKSL), 116 to 208 (KWFA…FKPV), and 216 to 302 (GSFV…LQLI). 5 consecutive transmembrane segments (helical) span residues 13–40 (FGVD…VKLL), 81–105 (TANV…KSLL), 114–134 (YAKW…LSLL), 184–205 (FVPS…YDSF), and 219–239 (VASF…SYPL). The ADP site is built by arginine 86 and lysine 98. Arginine 243 contributes to the ADP binding site. An important for transport activity region spans residues 243–248 (RRRMMM). Residues 243–248 (RRRMMM) carry the Nucleotide carrier signature motif motif. The chain crosses the membrane as a helical span at residues 279 to 299 (CGANIFRGVAAAGVISLYDQL).

This sequence belongs to the mitochondrial carrier (TC 2.A.29) family. In terms of assembly, monomer.

The protein localises to the mitochondrion inner membrane. The catalysed reaction is ADP(in) + ATP(out) = ADP(out) + ATP(in). Its activity is regulated as follows. The matrix-open state (m-state) is inhibited by the membrane-permeable bongkrekic acid (BKA). The cytoplasmic-open state (c-state) is inhibited by the membrane-impermeable toxic inhibitor carboxyatractyloside (CATR). ADP:ATP antiporter that mediates import of ADP into the mitochondrial matrix for ATP synthesis, and export of ATP out to fuel the cell. Cycles between the cytoplasmic-open state (c-state) and the matrix-open state (m-state): operates by the alternating access mechanism with a single substrate-binding site intermittently exposed to either the cytosolic (c-state) or matrix (m-state) side of the inner mitochondrial membrane. The protein is ADP,ATP carrier protein 1 (AAC1) of Saccharomyces cerevisiae (strain ATCC 204508 / S288c) (Baker's yeast).